The primary structure comprises 428 residues: Metal tolerance protein 10 (428 aa).

The Cytoplasmic segment spans residues 1–140 (MPLNSYIFFL…EMKKLAKSER (140 aa)). Residues 141–161 (LAVHISNATNLVLFVAKVYAS) form a helical membrane-spanning segment. Residues 162–167 (MESRSM) lie on the Vacuolar side of the membrane. A helical membrane pass occupies residues 168–188 (AVIASTLDSLLDLLSGFILWF). At 189–209 (TANAMRKPNQFHYPIGKRRMQ) the chain is on the cytoplasmic side. The helical transmembrane segment at 210–230 (PVGIIVFASVMATLGLQVLLE) threads the bilayer. Topologically, residues 231-248 (SGRQLVAKSGIHMNSTEE) are vacuolar. The chain crosses the membrane as a helical span at residues 249–269 (KWMIGIMVSVTIVKFLLMLYC). Over 270–287 (RGFQNEIVRAYAQDHLFD) the chain is Cytoplasmic. Residues 288 to 308 (VVTNSIGLATAVLAVKFYWWI) traverse the membrane as a helical segment. Over 309 to 311 (DPT) the chain is Vacuolar. Residues 312 to 332 (GAILIALYTIATWARTVLENV) form a helical membrane-spanning segment. Over 333-428 (HSLIGRSAPP…FTHRPEHKCN (96 aa)) the chain is Cytoplasmic.

The protein belongs to the cation diffusion facilitator (CDF) transporter (TC 2.A.4) family. SLC30A subfamily.

It is found in the vacuole membrane. Functionally, involved in sequestration of excess metal in the cytoplasm into vacuoles to maintain metal homeostasis. The sequence is that of Metal tolerance protein 10 (MTP10) from Arabidopsis thaliana (Mouse-ear cress).